Consider the following 85-residue polypeptide: Large ribosomal subunit protein bL27 (85 aa).

Residues 1-20 (MATKKAGGSTRNGRDSEAKR) are disordered.

Belongs to the bacterial ribosomal protein bL27 family.

The sequence is that of Large ribosomal subunit protein bL27 from Haemophilus influenzae (strain PittEE).